The primary structure comprises 434 residues: Beta-phenylalanine transaminase (434 aa).

Arg-41 is a (S)-3-amino-3-phenylpropanoate binding site. 132–133 (GT) is a pyridoxal 5'-phosphate binding site. Lys-267 is subject to N6-(pyridoxal phosphate)lysine. A pyridoxal 5'-phosphate-binding site is contributed by Thr-300.

The protein belongs to the class-III pyridoxal-phosphate-dependent aminotransferase family. In terms of assembly, homodimer. Pyridoxal 5'-phosphate is required as a cofactor.

It carries out the reaction (S)-3-amino-3-phenylpropanoate + 2-oxoglutarate = 3-oxo-3-phenylpropanoate + L-glutamate. The catalysed reaction is (S)-3-amino-3-phenylpropanoate + pyruvate = 3-oxo-3-phenylpropanoate + L-alanine. With respect to regulation, is inhibited by 2-aminooxyacetate (AOA), a mimic of beta-alanine and a known inhibitor of aminotransferases. Aminotransferase that acts exclusively on beta-amino acids and exhibits a broad substrate range in vitro, accepting meta-, para- and, to a lesser extent, ortho-substituted beta-phenylalanine derivatives as amino donors, and 2-oxoglutarate or pyruvate as amino acceptors. Is highly enantioselective toward (S)-beta-phenylalanine (is not active with (R)-beta-phenylalanine) and derivatives with different substituents on the phenyl ring, allowing the kinetic resolution of various racemic beta-amino acids to yield (R)-beta-amino acids with &gt;95% enantiomeric excess (ee). Highly prefers aromatic beta-amino acids over aliphatic beta-amino acids; cannot use beta-alanine or beta-glutamate as substrate. Is likely involved in the beta-phenylalanine degradation pathway that allows V.paradoxus strain CBF3 to use beta-phenylalanine as a sole nitrogen source. The sequence is that of Beta-phenylalanine transaminase from Variovorax paradoxus.